The primary structure comprises 524 residues: Serine/threonine-protein kinase PAK 2 (524 aa).

Residues 1–81 (MSDNGELEDK…PEISPPSDFE (81 aa)) are disordered. S2 is modified (N-acetylserine). 4 positions are modified to phosphoserine: S2, S20, S55, and S58. Phosphothreonine is present on T60. K62 carries the post-translational modification N6-acetyllysine. S64 carries the post-translational modification Phosphoserine. Residues 67–81 (KEKERPEISPPSDFE) are compositionally biased toward basic and acidic residues. A GTPase-binding region spans residues 69–112 (KERPEISPPSDFEHTIHVGFDAVTGEFTGMPEQWARLLQTSNIT). An autoregulatory region region spans residues 69-137 (KERPEISPPS…KFYDSNTVKQ (69 aa)). Positions 74-87 (ISPPSDFEHTIHVG) constitute a CRIB domain. An N6-acetyllysine modification is found at K128. Residue T134 is modified to Phosphothreonine. At Y139 the chain carries Phosphotyrosine. S141 is subject to Phosphoserine. Residue T143 is modified to Phosphothreonine. Disordered stretches follow at residues 143–164 (TPPE…GTEA) and 169–188 (TEEE…PRPD). Residue S152 is modified to Phosphoserine. Phosphothreonine is present on residues T154 and T169. Over residues 169–178 (TEEEDDDEET) the composition is skewed to acidic residues. The residue at position 197 (S197) is a Phosphoserine. Residue G213 is the site of N-myristoyl glycine; in form PAK-2p34 attachment. Positions 245 to 251 (PKKKYTR) match the Nuclear localization signal motif. Positions 249–499 (YTRYEKIGQG…SAKELLQHPF (251 aa)) constitute a Protein kinase domain. ATP contacts are provided by residues 255–263 (IGQGASGTV) and K278. R367 acts as the Proton acceptor in catalysis. Position 402 is a phosphothreonine; by autocatalysis (T402).

It belongs to the protein kinase superfamily. STE Ser/Thr protein kinase family. STE20 subfamily. As to quaternary structure, interacts tightly with GTP-bound but not GDP-bound CDC42/p21 and RAC1. Interacts with SH3MD4. Interacts with SCRIB. Interacts with ARHGEF7 and GIT1. PAK-2p34 interacts with ARHGAP10. (Microbial infection) Interacts with and activated by HIV-1 Nef. Full-length PAK2 is autophosphorylated when activated by CDC42/p21. Following cleavage, both peptides, PAK-2p27 and PAK-2p34, become highly autophosphorylated, with PAK-2p27 being phosphorylated on serine and PAK-2p34 on threonine residues, respectively. Autophosphorylation of PAK-2p27 can occur in the absence of any effectors and is dependent on phosphorylation of Thr-402, because PAK-2p27 is acting as an exogenous substrate. In terms of processing, during apoptosis proteolytically cleaved by caspase-3 or caspase-3-like proteases to yield active PAK-2p34. Post-translationally, ubiquitinated, leading to its proteasomal degradation. PAK-2p34 is myristoylated. In terms of tissue distribution, ubiquitously expressed. Higher levels seen in skeletal muscle, ovary, thymus and spleen.

The protein localises to the cytoplasm. It localises to the nucleus. It is found in the perinuclear region. The protein resides in the membrane. The catalysed reaction is L-seryl-[protein] + ATP = O-phospho-L-seryl-[protein] + ADP + H(+). The enzyme catalyses L-threonyl-[protein] + ATP = O-phospho-L-threonyl-[protein] + ADP + H(+). Its activity is regulated as follows. Activated by binding small G proteins. Binding of GTP-bound CDC42 or RAC1 to the autoregulatory region releases monomers from the autoinhibited dimer, enables phosphorylation of Thr-402 and allows the kinase domain to adopt an active structure. Following caspase cleavage, autophosphorylated PAK-2p34 is constitutively active. In terms of biological role, serine/threonine protein kinase that plays a role in a variety of different signaling pathways including cytoskeleton regulation, cell motility, cell cycle progression, apoptosis or proliferation. Acts as a downstream effector of the small GTPases CDC42 and RAC1. Activation by the binding of active CDC42 and RAC1 results in a conformational change and a subsequent autophosphorylation on several serine and/or threonine residues. Full-length PAK2 stimulates cell survival and cell growth. Phosphorylates MAPK4 and MAPK6 and activates the downstream target MAPKAPK5, a regulator of F-actin polymerization and cell migration. Phosphorylates JUN and plays an important role in EGF-induced cell proliferation. Phosphorylates many other substrates including histone H4 to promote assembly of H3.3 and H4 into nucleosomes, BAD, ribosomal protein S6, or MBP. Phosphorylates CASP7, thereby preventing its activity. Additionally, associates with ARHGEF7 and GIT1 to perform kinase-independent functions such as spindle orientation control during mitosis. On the other hand, apoptotic stimuli such as DNA damage lead to caspase-mediated cleavage of PAK2, generating PAK-2p34, an active p34 fragment that translocates to the nucleus and promotes cellular apoptosis involving the JNK signaling pathway. Caspase-activated PAK2 phosphorylates MKNK1 and reduces cellular translation. The protein is Serine/threonine-protein kinase PAK 2 (PAK2) of Homo sapiens (Human).